We begin with the raw amino-acid sequence, 443 residues long: Probable nitrate/nitrite antiporter NarK2 (443 aa).

12 helical membrane passes run 32–52 (ITTFNLTLSFITWYVVSALVV), 66–86 (LFWLTAMPGLAGGTLRIIWTF), 95–115 (HLVTFSTLLLLIPLLGWGFAV), 123–143 (WVLLLLAFLAGIGGGHFSGYM), 172–192 (IVQFVTPWIIGFALFGSLLGG), 210–230 (NATFAWVPFVLLGALLAWVYL), 256–276 (SLYIMTFGSFSGFSAIFPLLI), 292–312 (YAFLGPLVGSLARVIAGPISD), 314–334 (LGGAIVTQVSAIGIFLSALLV), 346–366 (FPMFVVAMLLIFFFSGVGNAS), 383–403 (VIGWTAAVAAYGPFLFSTLAA), and 409–429 (TGGFTAFFYGLMVFYAFNFFL).

Belongs to the major facilitator superfamily. Nitrate/nitrite porter (TC 2.A.1.8) family.

The protein resides in the cell membrane. The enzyme catalyses nitrate(in) + nitrite(out) = nitrate(out) + nitrite(in). Its function is as follows. Probable nitrate/nitrite antiporter that may be involved in nitrate import and nitrite export during anaerobic growth. The sequence is that of Probable nitrate/nitrite antiporter NarK2 from Thermus thermophilus.